Here is a 242-residue protein sequence, read N- to C-terminus: C-reactive protein 1.1 (242 aa).

An N-terminal signal peptide occupies residues methionine 1–alanine 24. One can recognise a Pentraxin (PTX) domain in the interval isoleucine 30–cysteine 241. 2 residues coordinate phosphocholine: threonine 60 and tyrosine 63. Disulfide bonds link cysteine 62-cysteine 125 and cysteine 112-cysteine 144. Residues aspartate 85 and asparagine 86 each contribute to the Ca(2+) site. N-linked (GlcNAc...) asparagine glycosylation is present at asparagine 147. 3 residues coordinate Ca(2+): glutamine 169, aspartate 170, and glutamine 180. Cysteine 207 and cysteine 241 are disulfide-bonded.

This sequence belongs to the pentraxin family. Homopentamer. Pentraxin (or pentaxin) have a discoid arrangement of 5 non-covalently bound subunits. The cofactor is Ca(2+).

It is found in the secreted. Functionally, might serve the role of immunoglobulins. The polypeptide is C-reactive protein 1.1 (Limulus polyphemus (Atlantic horseshoe crab)).